The following is an 852-amino-acid chain: Serine/threonine-protein kinase pakB (852 aa).

The disordered stretch occupies residues 1-334; it reads MEQSKRVSMM…NVGNKQDEEK (334 aa). Phosphoserine; by autocatalysis is present on Ser8. The segment covering 24 to 35 has biased composition (pro residues); sequence SPPPNRKPPPPN. Positions 44 to 56 are enriched in low complexity; sequence SSLNSSGSSFVSP. Residues 57–74 show a composition bias toward pro residues; the sequence is SPSPSPSPQQPVKRPLPS. Low complexity-rich tracts occupy residues 90 to 117 and 124 to 163; these read RPQQ…NSNG and FSSS…GSSN. A compositionally biased stretch (pro residues) spans 181 to 191; the sequence is TPPPPPQPTPS. Polar residues predominate over residues 201 to 210; it reads ASHNNTQHNI. Low complexity-rich tracts occupy residues 246–270 and 293–317; these read SPGS…STPI and SNSN…ATTS. In terms of domain architecture, CRIB spans 356–369; the sequence is VGSPFNVKHNIHVN. Residues 419 to 433 show a composition bias toward low complexity; it reads AQQEQQALMQKQMQQ. Positions 419 to 526 are disordered; the sequence is AQQEQQALMQ…GILSQQQEQQ (108 aa). A compositionally biased stretch (basic residues) spans 470 to 485; sequence PQHHHQQQPPQQHHHQ. Positions 486–514 are enriched in low complexity; sequence QQQQQHNNNNNNNNNNNNNNNNQQSAQQQ. One can recognise a Protein kinase domain in the interval 570-823; the sequence is GEGSTKIGEG…AKVLLNHPFL (254 aa). ATP contacts are provided by residues 576–584 and Lys599; that span reads IGEGAAGEV. The active-site Proton acceptor is Asp691.

Belongs to the protein kinase superfamily. STE Ser/Thr protein kinase family. STE20 subfamily. Interacts with rac1A, rac1B, rac1C, racA, racB, racC and racF1. Mg(2+) serves as cofactor. In terms of processing, autophosphorylated at Ser-8. This may stimulate interaction with GTP-bound Rac family members which then further stimulates autophosphorylation and kinase activity.

The protein localises to the membrane. Its subcellular location is the cytoplasm. It is found in the cytoskeleton. It carries out the reaction L-seryl-[protein] + ATP = O-phospho-L-seryl-[protein] + ADP + H(+). The enzyme catalyses L-threonyl-[protein] + ATP = O-phospho-L-threonyl-[protein] + ADP + H(+). In terms of biological role, regulator of the myosin I component of the cytoskeleton: required for regulation of cytokinesis, phagocytosis and pinocytosis. This Dictyostelium discoideum (Social amoeba) protein is Serine/threonine-protein kinase pakB.